The following is a 298-amino-acid chain: MRNTILFGVSMILLANLCFGIMSAFVKITADYFSPMENVFYRSITMTLLLLLIYPFKPYRLKSYKQGGFKKLAFRVVVGGLAMLAFFYNIEKISLATATAFSQCAPIYTVLLSPLLLKEKLKRSALISACIGLVGVVLISDPSVENVGLVEIIMGILSGIFVSLAYITLRDLREYYDKQAVILAFAFGMSLLGLAGMFIDIPFLSTGVHIPRKEDILWISLIGISGTLGQYFLTYAYMNAPAGIIAPIEYTRIVWGLLFGLYLGDTFLDLKSSLGVALILCSGLLIALPALLKELKKI.

10 helical membrane-spanning segments follow: residues 5–25, 36–56, 76–96, 97–117, 124–144, 147–167, 181–201, 216–236, 244–264, and 272–292; these read ILFG…MSAF, MENV…IYPF, VVVG…ISLA, TATA…PLLL, SALI…DPSV, VGLV…LAYI, VILA…FIDI, ILWI…LTYA, IIAP…LYLG, and SSLG…PALL. The 125-residue stretch at 17 to 141 folds into the EamA 1 domain; sequence LCFGIMSAFV…GLVGVVLISD (125 aa). An EamA 2 domain is found at 183 to 288; it reads LAFAFGMSLL…ILCSGLLIAL (106 aa).

The protein belongs to the EamA transporter family.

The protein localises to the cell membrane. This is an uncharacterized protein from Helicobacter pylori (strain J99 / ATCC 700824) (Campylobacter pylori J99).